The primary structure comprises 389 residues: Chalcone synthase 4 (389 aa).

C164 is an active-site residue.

The protein belongs to the thiolase-like superfamily. Chalcone/stilbene synthases family.

It carries out the reaction (E)-4-coumaroyl-CoA + 3 malonyl-CoA + 3 H(+) = 2',4,4',6'-tetrahydroxychalcone + 3 CO2 + 4 CoA. The protein operates within secondary metabolite biosynthesis; flavonoid biosynthesis. The primary product of this enzyme is 4,2',4',6'-tetrahydroxychalcone (also termed naringenin-chalcone or chalcone) which can under specific conditions spontaneously isomerize into naringenin. In Medicago sativa (Alfalfa), this protein is Chalcone synthase 4 (CHS4).